We begin with the raw amino-acid sequence, 352 residues long: Desmethylxanthohumol 6'-O-methyltransferase (352 aa).

Asp219 serves as a coordination point for S-adenosyl-L-methionine. The active-site Proton acceptor is the His257.

It belongs to the class I-like SAM-binding methyltransferase superfamily. Cation-independent O-methyltransferase family. Homodimer. As to expression, highly expressed in lupulin glands. Detected in early-, mid- and late-stage cones.

The protein resides in the cytoplasm. The enzyme catalyses desmethylxanthohumol + S-adenosyl-L-methionine = xanthohumol + S-adenosyl-L-homocysteine + H(+). The catalysed reaction is xanthogalenol + S-adenosyl-L-methionine = 4'-O-methylxanthohumol + S-adenosyl-L-homocysteine + H(+). The protein operates within secondary metabolite biosynthesis. Its activity is regulated as follows. Inhibited by S-adenosyl homocysteine. In terms of biological role, involved in the biosynthesis of prenylated phenolics natural products which contribute to the bitter taste of beer and display broad biological activities. Catalyzes the biosynthesis of xanthohumol. Methylates desmethylxanthohumol and xanthogalenol, but not caffeic acid, prenylflavanones, simple phenols or phenylpropanoids. The chain is Desmethylxanthohumol 6'-O-methyltransferase from Humulus lupulus (European hop).